The chain runs to 108 residues: ATP synthase subunit H, mitochondrial (108 aa).

The N-terminal 19 residues, 1–19, are a transit peptide targeting the mitochondrion; that stretch reads MFTLRAASRRAFSTSIARR. Disordered stretches follow at residues 40–60 and 75–108; these read AKDAEGQVKPWSAPSAPKPPV and APVDVEGQTNSKSASPQANDEDWLAFEEEEGVAV. A compositionally biased stretch (low complexity) spans 47-60; that stretch reads VKPWSAPSAPKPPV. The span at 81–92 shows a compositional bias: polar residues; sequence GQTNSKSASPQA. The segment covering 93 to 108 has biased composition (acidic residues); sequence NDEDWLAFEEEEGVAV.

As to quaternary structure, F-type ATP synthases have 2 components, the catalytic core F(1) and the membrane-embedded component F(0), linked together by a central stalk and a peripheral stalk. The central stalk, also called rotor shaft, is often seen as part of F(1). The peripheral stalk is seen as part of F(0). F(0) contains the membrane channel next to the rotor. F-type ATP synthases form dimers but each monomer functions independently in ATP generation. The dimer consists of 17 different polypeptides: ATP1 (subunit alpha, 3 molecules per monomer, part of F(1)), ATP2 (subunit beta, 3 copies per monomer, part of F(1)), ATP3 (subunit gamma, part of the central stalk), ATP4 (subunit b, part of the peripheral stalk), ATP5/OSCP (subunit 5/OSCP, part of the peripheral stalk), ATP6 (subunit a, part of the peripheral stalk), ATP7 (subunit d, part of the peripheral stalk), ATP8 (subunit 8, part of the peripheral stalk), OLI1 (subunit c, part of the rotor, 10 molecules per monomer), ATP14 (subunit H, part of the peripheral stalk), ATP15 (subunit epsilon, part of the central stalk), ATP16 (subunit delta, part of the central stalk), ATP17 (subunit f, part of the peripheral stalk), ATP18 (subunit i/j, part of the peripheral stalk), ATP19 (subunit k, dimer-specific, at interface between monomers), ATP20 (subunit g, at interface between monomers), TIM11 (subunit e, at interface between monomers).

Its subcellular location is the mitochondrion inner membrane. In terms of biological role, mitochondrial membrane ATP synthase (F(1)F(0) ATP synthase or Complex V) produces ATP from ADP in the presence of a proton gradient across the membrane which is generated by electron transport complexes of the respiratory chain. F-type ATP synthases consist of two structural domains, F(1) - containing the extramembraneous catalytic core, and F(0) - containing the membrane proton channel, linked together by a central stalk and a peripheral stalk. During catalysis, ATP synthesis in the catalytic domain of F(1) is coupled via a rotary mechanism of the central stalk subunits to proton translocation. Part of the peripheral stalk. The chain is ATP synthase subunit H, mitochondrial from Yarrowia lipolytica (strain CLIB 122 / E 150) (Yeast).